Consider the following 513-residue polypeptide: GMP synthase [glutamine-hydrolyzing] (513 aa).

A Glutamine amidotransferase type-1 domain is found at 7–198; that stretch reads LIVVVDFGGQ…LFNIAGCRGD (192 aa). Cysteine 84 (nucleophile) is an active-site residue. Catalysis depends on residues histidine 172 and glutamate 174. The GMPS ATP-PPase domain occupies 199 to 388; that stretch reads WTTESFITRQ…LGVPEEIVGR (190 aa). Residue 226–232 participates in ATP binding; the sequence is SGGVDSS.

In terms of assembly, homodimer.

The enzyme catalyses XMP + L-glutamine + ATP + H2O = GMP + L-glutamate + AMP + diphosphate + 2 H(+). Its pathway is purine metabolism; GMP biosynthesis; GMP from XMP (L-Gln route): step 1/1. Functionally, catalyzes the synthesis of GMP from XMP. The protein is GMP synthase [glutamine-hydrolyzing] of Symbiobacterium thermophilum (strain DSM 24528 / JCM 14929 / IAM 14863 / T).